We begin with the raw amino-acid sequence, 296 residues long: Homoserine kinase (296 aa).

Position 85 to 95 (85 to 95 (PLSRGLGSSAA)) interacts with ATP.

This sequence belongs to the GHMP kinase family. Homoserine kinase subfamily.

It is found in the cytoplasm. It carries out the reaction L-homoserine + ATP = O-phospho-L-homoserine + ADP + H(+). Its pathway is amino-acid biosynthesis; L-threonine biosynthesis; L-threonine from L-aspartate: step 4/5. In terms of biological role, catalyzes the ATP-dependent phosphorylation of L-homoserine to L-homoserine phosphate. This chain is Homoserine kinase, found in Clostridium acetobutylicum (strain ATCC 824 / DSM 792 / JCM 1419 / IAM 19013 / LMG 5710 / NBRC 13948 / NRRL B-527 / VKM B-1787 / 2291 / W).